The following is a 227-amino-acid chain: MVFGLSRAIRKAEKNAIIAELKVYSPKYGDLLKGRNPFEILRAYERAGAVGISYITDPKYFRGSFEFLRKLCRETELPVLRKDFIASKEEVERTAEAGASAVLLITRLLKEELPEFVDFAKEHGLDTLVEVHSEEELAIALQTDSTMIGINNRDIGKLELDDGNVSLTEKLAPLIPKRYVKVSESGIAGTEDLKRALRHADAALIGTALMKTPDPEEFLRKLVEVEV.

Belongs to the TrpC family.

The catalysed reaction is 1-(2-carboxyphenylamino)-1-deoxy-D-ribulose 5-phosphate + H(+) = (1S,2R)-1-C-(indol-3-yl)glycerol 3-phosphate + CO2 + H2O. It participates in amino-acid biosynthesis; L-tryptophan biosynthesis; L-tryptophan from chorismate: step 4/5. The chain is Indole-3-glycerol phosphate synthase (trpC) from Thermococcus kodakarensis (strain ATCC BAA-918 / JCM 12380 / KOD1) (Pyrococcus kodakaraensis (strain KOD1)).